The chain runs to 296 residues: Sulfotransferase 6B1 (296 aa).

His-112 serves as the catalytic Proton acceptor. Residues Arg-134, Ser-142, Tyr-197, and 253–255 (RKG) contribute to the 3'-phosphoadenylyl sulfate site.

The protein belongs to the sulfotransferase 1 family.

It is found in the cytoplasm. Its subcellular location is the cytosol. It carries out the reaction thyroxine + 3'-phosphoadenylyl sulfate = thyroxine sulfate + adenosine 3',5'-bisphosphate + H(+). With respect to regulation, strongly inhibited by the divalent metal cations Fe(2+), Hg(2+), Co(2+), Zn(2+), Cu(2+) and Cd(2+). Its function is as follows. Sulfotransferase that utilizes 3'-phospho-5'-adenylyl sulfate (PAPS) as sulfonate donor to catalyze the sulfate conjugation of a variety of xenobiotic and endogenous compounds, including dopamine, T3 (triiodo-L-thyronine), T4 (thyroxine), flavonoids, isoflavonoids, and other phenolic compounds. In Danio rerio (Zebrafish), this protein is Sulfotransferase 6B1.